We begin with the raw amino-acid sequence, 640 residues long: Preterminal protein (640 aa).

The segment at 232–257 (PSQEGEGEERENPDRASSRPRPQETV) is disordered. Positions 351-360 (RLPVRRRRRR) match the Nuclear localization signal motif. S549 carries the O-(5'-phospho-DNA)-serine modification. Positions 614–640 (GADVPLPAMPPGPEPPLPPGARPRHRF) are disordered. Residues 620–634 (PAMPPGPEPPLPPGA) are compositionally biased toward pro residues.

This sequence belongs to the adenoviridae terminal protein family. Heterodimer with the polymerase; this heterodimer binds to bp 9 to 18 of the genome. Interacts with host POU2F1; POU2F1 binds to the auxiliary sequences in the inverted terminal repeats and tethers the pTP-POL heterodimer to the origin DNA thereby participating in the assembly of the pre-initiation complex (POL-TP-DBP-NFIA-POU2F1). In terms of processing, preterminal protein is used to replicate viral genome, upon genomic encapsidation it is processed first into iTP and finally into TP by adenovirus protease.

The protein resides in the host nucleus matrix. In terms of biological role, protein covalently bound to the viral DNA that acts as a primer for viral genomic replication by DNA strand displacement. Assembles on the viral origin of replication in an initiation complex with viral polymerase, DBP, host NFIA and host POU2F1/OCT1. During initiation, the polymerase covalently couples the first dCTP with Ser-580 of pTP. The terminal protein stimulates the template activity over 20 fold compared to protein-free templates. Neo-synthesized viral genomes are linked to two preterminal proteins, one for each 5' end. These new genomes are encapsidated in the nucleus, and during capsid maturation by viral protease, preterminal protein is first cleaved into intermediary (iTP), then into mature TP. May play a role in host nuclear matrix localization of genomic DNA. This Human adenovirus B serotype 7 (HAdV-7) protein is Preterminal protein.